A 59-amino-acid polypeptide reads, in one-letter code: Large ribosomal subunit protein bL32 (59 aa).

The segment covering Met1–Arg16 has biased composition (basic residues). The interval Met1–Asp20 is disordered.

Belongs to the bacterial ribosomal protein bL32 family.

In Sphingopyxis alaskensis (strain DSM 13593 / LMG 18877 / RB2256) (Sphingomonas alaskensis), this protein is Large ribosomal subunit protein bL32.